The following is a 229-amino-acid chain: Urease accessory protein UreF (229 aa).

The protein belongs to the UreF family. In terms of assembly, ureD, UreF and UreG form a complex that acts as a GTP-hydrolysis-dependent molecular chaperone, activating the urease apoprotein by helping to assemble the nickel containing metallocenter of UreC. The UreE protein probably delivers the nickel.

It localises to the cytoplasm. Required for maturation of urease via the functional incorporation of the urease nickel metallocenter. The sequence is that of Urease accessory protein UreF from Nostoc sp. (strain PCC 7120 / SAG 25.82 / UTEX 2576).